We begin with the raw amino-acid sequence, 491 residues long: Homeobox protein unplugged (491 aa).

Disordered regions lie at residues 1 to 23 (MERP…TKTT), 46 to 69 (SASA…QEQE), 124 to 146 (AGKE…PLPH), and 227 to 329 (FSPA…RRTA). The segment covering 254-264 (GDSSSDISLTL) has biased composition (polar residues). Positions 305–316 (GLGGKDSQGNGS) are enriched in gly residues. Positions 323-382 (SRRRRTAFTSEQLLELEREFHAKKYLSLTERSQIATSLKLSEVQVKIWFQNRRAKWKRVK) form a DNA-binding region, homeobox.

It is found in the nucleus. Its function is as follows. Plays a regulatory role in neural branching of the tracheae: segment-specific aspects of these neural branching patterns appear to be generated by homeotic regulation of expression. This chain is Homeobox protein unplugged, found in Drosophila pseudoobscura pseudoobscura (Fruit fly).